The primary structure comprises 318 residues: NADH-ubiquinone oxidoreductase chain 1 (318 aa).

8 consecutive transmembrane segments (helical) span residues 3-23, 70-90, 100-120, 146-166, 171-191, 222-242, 253-273, and 294-314; these read MVNLLTMIVPILLAVAFLTLI, MFIIAPILALTLALTMWIPLP, LAVLFMLAMSSLAVYSILWSG, LAIILLSVLLLSGSFSLSTLI, HTWLMLSSWPLAMMWFISTLA, LFFMAEYANIIMMNTLTAILF, ELYTINLIIKALLLTVFFLWI, and LPLTLALCMWHVAMPITMAGI.

The protein belongs to the complex I subunit 1 family.

It is found in the mitochondrion inner membrane. The catalysed reaction is a ubiquinone + NADH + 5 H(+)(in) = a ubiquinol + NAD(+) + 4 H(+)(out). Functionally, core subunit of the mitochondrial membrane respiratory chain NADH dehydrogenase (Complex I) that is believed to belong to the minimal assembly required for catalysis. Complex I functions in the transfer of electrons from NADH to the respiratory chain. The immediate electron acceptor for the enzyme is believed to be ubiquinone. This chain is NADH-ubiquinone oxidoreductase chain 1 (MT-ND1), found in Pteropus vampyrus (Large flying fox).